The sequence spans 540 residues: Putative cysteine ligase BshC (540 aa).

Positions 455-491 (GKENLKRLIRVVNSFEEKVKQRHRKNNQVAIQQLQKI) form a coiled coil.

It belongs to the BshC family.

Functionally, involved in bacillithiol (BSH) biosynthesis. May catalyze the last step of the pathway, the addition of cysteine to glucosamine malate (GlcN-Mal) to generate BSH. This Desulforamulus reducens (strain ATCC BAA-1160 / DSM 100696 / MI-1) (Desulfotomaculum reducens) protein is Putative cysteine ligase BshC.